A 292-amino-acid polypeptide reads, in one-letter code: ATP synthase subunit a (292 aa).

Helical transmembrane passes span 39–59, 73–93, 102–122, 128–148, 172–192, 196–216, and 231–251; these read QILG…FYKL, FLLL…DLLG, YFLM…LGGI, SLTF…VMGI, TFIP…SISL, GNIL…IFIF, and VFAG…AGVL.

This sequence belongs to the ATPase A chain family. In terms of assembly, F-type ATPases have 2 components, CF(1) - the catalytic core - and CF(0) - the membrane proton channel. CF(1) has five subunits: alpha(3), beta(3), gamma(1), delta(1), epsilon(1). CF(0) has three main subunits: a(1), b(2) and c(9-12). The alpha and beta chains form an alternating ring which encloses part of the gamma chain. CF(1) is attached to CF(0) by a central stalk formed by the gamma and epsilon chains, while a peripheral stalk is formed by the delta and b chains.

Its subcellular location is the cell membrane. Functionally, key component of the proton channel; it plays a direct role in the translocation of protons across the membrane. This chain is ATP synthase subunit a, found in Mycoplasma genitalium (strain ATCC 33530 / DSM 19775 / NCTC 10195 / G37) (Mycoplasmoides genitalium).